A 101-amino-acid polypeptide reads, in one-letter code: Enhancer of yellow 2 transcription factor (101 aa).

It belongs to the ENY2 family. In terms of assembly, component of the nuclear pore complex (NPC)-associated AMEX complex (anchoring and mRNA export complex), composed of at least e(y)2 and xmas-2. Component of the SAGA transcription coactivator-HAT complexes, at least composed of Ada2b, e(y)2, Pcaf/Gcn5, Taf10 and Nipped-A/Trrap. Within the SAGA complex, e(y)2, Sgf11, and not/nonstop form an additional subcomplex of SAGA called the DUB module (deubiquitination module). Component of the THO complex, composed of at least e(y)2, HPR1, THO2, THOC5, THOC6 and THOC7. Interacts with e(y)1. Interacts with su(Hw) (via zinc fingers). Interacts with xmas-2; required for localization to the nuclear periphery. Interacts with the nuclear pore complex (NPC).

The protein localises to the nucleus. It localises to the nucleoplasm. Its subcellular location is the cytoplasm. Involved in mRNA export coupled transcription activation by association with both the AMEX and the SAGA complexes. The SAGA complex is a multiprotein complex that activates transcription by remodeling chromatin and mediating histone acetylation and deubiquitination. Within the SAGA complex, participates in a subcomplex that specifically deubiquitinates histone H2B. The SAGA complex is recruited to specific gene promoters by activators, where it is required for transcription. Required for nuclear receptor-mediated transactivation. Involved in transcription elongation by recruiting the THO complex onto nascent mRNA. The AMEX complex functions in docking export-competent ribonucleoprotein particles (mRNPs) to the nuclear entrance of the nuclear pore complex (nuclear basket). AMEX participates in mRNA export and accurate chromatin positioning in the nucleus by tethering genes to the nuclear periphery. The sequence is that of Enhancer of yellow 2 transcription factor from Drosophila yakuba (Fruit fly).